A 114-amino-acid polypeptide reads, in one-letter code: Large ribosomal subunit protein bL19 (114 aa).

The protein belongs to the bacterial ribosomal protein bL19 family.

This protein is located at the 30S-50S ribosomal subunit interface and may play a role in the structure and function of the aminoacyl-tRNA binding site. The polypeptide is Large ribosomal subunit protein bL19 (Acetivibrio thermocellus (strain ATCC 27405 / DSM 1237 / JCM 9322 / NBRC 103400 / NCIMB 10682 / NRRL B-4536 / VPI 7372) (Clostridium thermocellum)).